The primary structure comprises 232 residues: Orotidine 5'-phosphate decarboxylase (232 aa).

Substrate-binding positions include Asp-13, Lys-35, 62–71 (DLKFHDIPNT), Thr-122, Arg-182, Gln-191, Gly-211, and Arg-212. Lys-64 acts as the Proton donor in catalysis.

It belongs to the OMP decarboxylase family. Type 1 subfamily. Homodimer.

It catalyses the reaction orotidine 5'-phosphate + H(+) = UMP + CO2. It participates in pyrimidine metabolism; UMP biosynthesis via de novo pathway; UMP from orotate: step 2/2. Catalyzes the decarboxylation of orotidine 5'-monophosphate (OMP) to uridine 5'-monophosphate (UMP). This Pseudomonas fluorescens (strain Pf0-1) protein is Orotidine 5'-phosphate decarboxylase.